A 900-amino-acid chain; its full sequence is DNA mismatch repair protein MutS (900 aa).

637-644 (GPNMAGKS) serves as a coordination point for ATP.

The protein belongs to the DNA mismatch repair MutS family.

Its function is as follows. This protein is involved in the repair of mismatches in DNA. It is possible that it carries out the mismatch recognition step. This protein has a weak ATPase activity. The chain is DNA mismatch repair protein MutS from Methanosarcina acetivorans (strain ATCC 35395 / DSM 2834 / JCM 12185 / C2A).